The sequence spans 332 residues: MKQVQTKRDWKKLAYDVVEEKVITKEDAIAILEADDTEILEIMNAAYIIRHHHFGKKVKLNMIINTKSGLCPEDCGYCSQSIISEAPIDKYAWLTQEKIVEGAHEAIRRKAGTYCIVASGRRPTDKEVNHVIGAVKEIRETTDLKICCCLGFLNEDQAGRLAEAGVHRYNHNLNTHVNNYESICSTHTYDDRVDTVQKAKQAGISPCSGAIFGMGETIEERAEIAFELQRIDADSIPCNFLVAVKGTPLEGQKELTPVECLKVLAMMRFVNPTKEIRISGGREINLRSVQPIGLFAANSIFVGDYLTTAGQEPTADWGMIEDLGFEIEECAL.

In terms of domain architecture, Radical SAM core spans 53 to 282 (HFGKKVKLNM…TKEIRISGGR (230 aa)). [4Fe-4S] cluster contacts are provided by cysteine 71, cysteine 75, and cysteine 78. The [2Fe-2S] cluster site is built by cysteine 115, cysteine 147, cysteine 207, and arginine 277.

Belongs to the radical SAM superfamily. Biotin synthase family. In terms of assembly, homodimer. [4Fe-4S] cluster is required as a cofactor. The cofactor is [2Fe-2S] cluster.

It catalyses the reaction (4R,5S)-dethiobiotin + (sulfur carrier)-SH + 2 reduced [2Fe-2S]-[ferredoxin] + 2 S-adenosyl-L-methionine = (sulfur carrier)-H + biotin + 2 5'-deoxyadenosine + 2 L-methionine + 2 oxidized [2Fe-2S]-[ferredoxin]. It participates in cofactor biosynthesis; biotin biosynthesis; biotin from 7,8-diaminononanoate: step 2/2. Its function is as follows. Catalyzes the conversion of dethiobiotin (DTB) to biotin by the insertion of a sulfur atom into dethiobiotin via a radical-based mechanism. The protein is Biotin synthase of Bacillus cereus (strain ATCC 10987 / NRS 248).